Reading from the N-terminus, the 509-residue chain is Maturase K (509 aa).

It belongs to the intron maturase 2 family. MatK subfamily.

It is found in the plastid. The protein localises to the chloroplast. Usually encoded in the trnK tRNA gene intron. Probably assists in splicing its own and other chloroplast group II introns. The chain is Maturase K from Ibicella lutea (Yellow unicorn-plant).